We begin with the raw amino-acid sequence, 252 residues long: Aliphatic sulfonates import ATP-binding protein SsuB 1 (252 aa).

The ABC transporter domain occupies 6-234; the sequence is LQLHIAGKRF…PRDRQAHEAA (229 aa). 38–45 serves as a coordination point for ATP; that stretch reads GASGCGKS.

It belongs to the ABC transporter superfamily. Aliphatic sulfonates importer (TC 3.A.1.17.2) family. The complex is composed of two ATP-binding proteins (SsuB), two transmembrane proteins (SsuC) and a solute-binding protein (SsuA).

It localises to the cell inner membrane. It catalyses the reaction ATP + H2O + aliphatic sulfonate-[sulfonate-binding protein]Side 1 = ADP + phosphate + aliphatic sulfonateSide 2 + [sulfonate-binding protein]Side 1.. Functionally, part of the ABC transporter complex SsuABC involved in aliphatic sulfonates import. Responsible for energy coupling to the transport system. In Xanthomonas axonopodis pv. citri (strain 306), this protein is Aliphatic sulfonates import ATP-binding protein SsuB 1.